The sequence spans 75 residues: UPF0154 protein MYPE400 (75 aa).

The helical transmembrane segment at Ile-5–Phe-27 threads the bilayer.

Belongs to the UPF0154 family.

The protein localises to the membrane. The polypeptide is UPF0154 protein MYPE400 (Malacoplasma penetrans (strain HF-2) (Mycoplasma penetrans)).